We begin with the raw amino-acid sequence, 1153 residues long: MNKNIFITLLISLLLLSGCTGDTCIDPDDFGFIKFNVSARYDPEEITSRQEGNQVAPWRDSAYKVNGYPLTIMVRPWSYILGDKNTSGQLSAWCPWYGQKNNTTTLAAFCVKLQPCTFWDNTRLDMCTPNPANQNDAMISNAPCIMTNGVGLYFLIAAKNTDPNISPDSQSKPQGITQHLGEELTSGYEFYSTSSTGQFSKAGGINYQYKGEDKSKYAQSPLYFKIIDKFYNDNSGQYRLVIKSGVTDTRADPLQFLTDLIKGVLFGKDGIIKKTYQQIIDTSGYRMSVSAILTLYIMFTGFSFLIGNINLTHVELIVRILKVSIVSILLSTDKAWTFFHDYLFVFFIDGVQQILQIINEASATGPGSQSLLGLLISPQTLSKLFSLLFVDWLGFIYIILYLIALYFIFFLIFKATIIYLTALITIGMIIIMGPIFICFMLFNITRSLFENWLRQLISYALQPIILFTGIAFISMIIRTEIYSTLGFAVCKHDFPNLGPINEIFGSFLEDIDPSLGHSIFYWWFPVPMKGGINNFHKANILVPKDHIVVDDSCKNDPDKCKHCAAYECIDERYIELPFLDLVKDAKRISNFINGKFVQLDGILLIFVSIYLLSKFNDTAISTAQFIAGTSGNLTEIQKVNQQSYESAAKQMNRPLNYVAKTVSAPVTSRVSAGKEQVRMFFAEKFENMMMGRLEKQALGSSANKTVQNEVKRKYGIDSKDVKMNAITDYENGIAGLLKNLPKGNELKAKELSQMKFTQLRDKIAANKYGVKDYAALSKEQKAELDKSLKDANLRELASDANFTRDYQDAYKNAHQEMSGRGVGLFGKNIGVLRSWQEIKHRVDTKRKLKEEKRVGIGEKIYAGYTGIKRGVLTAIVGKDLRDAYEGNLTSAEWHDFEYNDPRLRTYSEKLKDDEKAREHEELQMHINKEALAAQADILSPEYLARLEKAGRHSDVEYYQELAQRKLIHEVHGRLFEEGEPVMMGDRFMREKATDSQMRDMIDNAHRKHAEFIDGDRYIRRQEHYDIMHEKAQENLEQTYKELKDHFKRDDIKIEEMPALIAQKVKDTAEGAEIDQKITEELNNFNADVKNYEYSTEVLNKIEDRKQAITDEVNAQIDKINKYRENAKMQTYVKPIVNEGRKLRKLEDHLRNMK.

An N-terminal signal peptide occupies residues 1-18 (MNKNIFITLLISLLLLSG). Cys19 is lipidated: N-palmitoyl cysteine. Cys19 carries S-diacylglycerol cysteine lipidation. Helical transmembrane passes span 289-309 (VSAI…IGNI), 393-413 (LGFI…FLIF), 422-442 (ALIT…FMLF), and 457-477 (ISYA…SMII).

It belongs to the TrbL/VirB6 family.

It localises to the cell membrane. This is an uncharacterized protein from Rickettsia conorii (strain ATCC VR-613 / Malish 7).